The primary structure comprises 454 residues: uncharacterized protein (454 aa).

[4Fe-4S] cluster is bound by residues C73, C79, C82, and C154. S-adenosyl-L-methionine contacts are provided by Q279, F307, D328, and D381. C408 (nucleophile) is an active-site residue.

The protein belongs to the class I-like SAM-binding methyltransferase superfamily. RNA M5U methyltransferase family.

This is an uncharacterized protein from Leptospira interrogans serogroup Icterohaemorrhagiae serovar Lai (strain 56601).